The chain runs to 219 residues: Protein DCL homolog, chloroplastic (219 aa).

The N-terminal 48 residues, 1–48, are a transit peptide targeting the chloroplast; sequence MSLASIPSSSPVASPYFRCRTYIFSFSSSPLCLYFPRGDSTSLRPRVR. The segment at 70-96 is disordered; it reads LRRPRIASEESSEEEEEEEEENSEGDE. A compositionally biased stretch (acidic residues) spans 79 to 96; it reads ESSEEEEEEEEENSEGDE.

As to expression, expressed in leaves, stems, flowers and siliques.

The protein resides in the plastid. It localises to the chloroplast. Its function is as follows. Required for normal plastid function and plant development. Required for correct plastid ribosome assembly. Required for processing and maturation of 4.5S rRNA. The polypeptide is Protein DCL homolog, chloroplastic (Arabidopsis thaliana (Mouse-ear cress)).